Here is a 144-residue protein sequence, read N- to C-terminus: Transcription antitermination protein NusB (144 aa).

It belongs to the NusB family.

Functionally, involved in transcription antitermination. Required for transcription of ribosomal RNA (rRNA) genes. Binds specifically to the boxA antiterminator sequence of the ribosomal RNA (rrn) operons. The polypeptide is Transcription antitermination protein NusB (Haemophilus influenzae (strain 86-028NP)).